A 220-amino-acid polypeptide reads, in one-letter code: GTP-binding protein YPT53 (220 aa).

Residues 19 to 26, 67 to 71, and 125 to 128 each bind GTP; these read GESAVGKS, DTAGQ, and NKMD. S-geranylgeranyl cysteine attachment occurs at residues Cys218 and Cys220. Cys220 is modified (cysteine methyl ester).

Belongs to the small GTPase superfamily. Rab family.

Its subcellular location is the cell membrane. Its function is as follows. Required for transport in the endocytic pathway and for correct sorting of the vacuolar hydrolases suggesting a possible intersection of the endocytic with the vacuolar sorting pathway. May be involved in recruiting the MON1-CCZ1 complex to membranes enriched in phosphatidylinositol 3-phosphate (PtdIns[3]P) or other charged lipids, leading to recruitment of YPT7. The sequence is that of GTP-binding protein YPT53 (YPT53) from Saccharomyces cerevisiae (strain ATCC 204508 / S288c) (Baker's yeast).